The following is a 569-amino-acid chain: Phosphoglucomutase 2 (569 aa).

The interval 1–23 (MSFQIETVPTKPYEDQKPGTSGL) is disordered. Ser2 is subject to N-acetylserine. Position 24 (Arg24) interacts with alpha-D-glucose 1,6-bisphosphate. Phosphothreonine occurs at positions 111 and 117. Alpha-D-glucose 1,6-bisphosphate is bound at residue Ser119. Residue Ser119 is the Phosphoserine intermediate of the active site. Mg(2+)-binding residues include Ser119, Asp290, Asp292, and Asp294. A Phosphoserine modification is found at Ser119. Positions 294, 295, 359, 378, 380, and 391 each coordinate alpha-D-glucose 1,6-bisphosphate.

This sequence belongs to the phosphohexose mutase family. As to quaternary structure, monomer. Mg(2+) is required as a cofactor. Zn(2+) serves as cofactor. In terms of processing, O-glycosylated with mannose residues. Substrate of UDP-glucose--glycoprotein glucose phosphotransferase, linking glucose in a phosphodiester linkage to O-linked mannose.

It is found in the cytoplasm. It carries out the reaction alpha-D-glucose 1-phosphate = alpha-D-glucose 6-phosphate. It catalyses the reaction O-phospho-L-seryl-[protein] + alpha-D-glucose 1-phosphate = alpha-D-glucose 1,6-bisphosphate + L-seryl-[protein]. The enzyme catalyses alpha-D-glucose 1,6-bisphosphate + L-seryl-[protein] = O-phospho-L-seryl-[protein] + alpha-D-glucose 6-phosphate. Functionally, major phosphoglucomutase isozyme that catalyzes the reversible isomerization of alpha-D-glucose 1-phosphate to alpha-D-glucose 6-phosphate. The mechanism proceeds via the intermediate compound alpha-D-glucose 1,6-bisphosphate. Constitutes about 80-90% of the phosphoglucomutase activity in the cell. Key enzyme in hexose metabolism. The forward reaction is an essential step in the energy metabolism of galactose since the product of the galactose pathway enzymes in yeast is glucose 1-phosphate. The reverse reaction is an essential step for biosynthesis when carbon sources other than galactose are the energy source because glucose 1-phosphate is the starting point for the synthesis of UDP-glucose, which acts as a precursor for the synthesis of oligosaccharides and trehalose. The chain is Phosphoglucomutase 2 from Saccharomyces cerevisiae (strain ATCC 204508 / S288c) (Baker's yeast).